The sequence spans 212 residues: MSIGILGTKLGMTQIFDNKTGVAIPVTVVQAGPCPVTQVKTKKTDGYESIQVGYKTVKEKALNKPLLGHLAKAGVSPLRHLIEYRLEDASAYTLGQEITADIFQEGDLVDVAGTTIGRGFSGYQKRHNFKRGNMTHGSKNHRLPGSTGAGTTPGRVFPGKRMAGQYGSTQVTIRKLSVVKIDSERNLILIKGAVPGKPGTLLNITPAKKFGK.

The tract at residues 131-155 is disordered; the sequence is RGNMTHGSKNHRLPGSTGAGTTPGR.

It belongs to the universal ribosomal protein uL3 family. In terms of assembly, part of the 50S ribosomal subunit. Forms a cluster with proteins L14 and L19.

Its function is as follows. One of the primary rRNA binding proteins, it binds directly near the 3'-end of the 23S rRNA, where it nucleates assembly of the 50S subunit. This Microcystis aeruginosa (strain NIES-843 / IAM M-2473) protein is Large ribosomal subunit protein uL3.